Consider the following 320-residue polypeptide: Ribose-phosphate pyrophosphokinase (320 aa).

Residues 43-45 (DGE) and 102-103 (RQ) contribute to the ATP site. 2 residues coordinate Mg(2+): His136 and Asp178. Residue Lys201 is part of the active site. D-ribose 5-phosphate-binding positions include Arg203, Asp227, and 231 to 235 (DTAGT).

The protein belongs to the ribose-phosphate pyrophosphokinase family. Class I subfamily. In terms of assembly, homohexamer. The cofactor is Mg(2+).

The protein resides in the cytoplasm. The enzyme catalyses D-ribose 5-phosphate + ATP = 5-phospho-alpha-D-ribose 1-diphosphate + AMP + H(+). It functions in the pathway metabolic intermediate biosynthesis; 5-phospho-alpha-D-ribose 1-diphosphate biosynthesis; 5-phospho-alpha-D-ribose 1-diphosphate from D-ribose 5-phosphate (route I): step 1/1. In terms of biological role, involved in the biosynthesis of the central metabolite phospho-alpha-D-ribosyl-1-pyrophosphate (PRPP) via the transfer of pyrophosphoryl group from ATP to 1-hydroxyl of ribose-5-phosphate (Rib-5-P). The sequence is that of Ribose-phosphate pyrophosphokinase from Clostridium tetani (strain Massachusetts / E88).